Consider the following 379-residue polypeptide: Tryptophan 2,3-dioxygenase (379 aa).

Substrate-binding positions include 57 to 61 and Arg-128; that span reads FIITH. Position 312 (His-312) interacts with heme. Thr-327 provides a ligand contact to substrate.

Belongs to the tryptophan 2,3-dioxygenase family. Homotetramer. Dimer of dimers. The cofactor is heme.

It carries out the reaction L-tryptophan + O2 = N-formyl-L-kynurenine. Its pathway is amino-acid degradation; L-tryptophan degradation via kynurenine pathway; L-kynurenine from L-tryptophan: step 1/2. It participates in pigment biosynthesis; ommochrome biosynthesis. Functionally, heme-dependent dioxygenase that catalyzes the oxidative cleavage of the L-tryptophan (L-Trp) pyrrole ring and converts L-tryptophan to N-formyl-L-kynurenine. Catalyzes the oxidative cleavage of the indole moiety. The protein is Tryptophan 2,3-dioxygenase of Drosophila yakuba (Fruit fly).